Here is a 492-residue protein sequence, read N- to C-terminus: MSKIFDLVVIGAGSGGLEAGWNAATLYKKRVAVIDVQTHHGPPHYAALGGTCVNVGCVPKKLMVTGAQYMDHLRESAGFGWEFDGSSVKANWKKLIAAKNEAVLDINKSYEGMFNDTEGLDFFLGWGSLESKNVVVVRETADPKSAVKERLQADHILLATGSWPQMPAIPGVEHCISSNEAFYLPEPPRRVLTVGGGFISVEFAGIFNAYKPPGGKVTLCYRNNLILRGFDETIREEVTKQLTANGIEIMTNENPAKVSLNTDGSKHVTFESGKTLDVDVVMMAIGRIPRTNDLQLGNVGVKLTPKGGVQVDEFSRTNVPNIYAIGDITDRLMLTPVAINEGAALVDTVFGNKPRKTDHTRVASAVFSIPPIGTCGLIEEVAAKEFEKVAVYMSSFTPLMHNISGSKYKKFVAKIVTNHSDGTVLGVHLLGDGAPEIIQAVGVCLRLNAKISDFYNTIGVHPTSAEELCSMRTPSYYYLKGEKMETLPESSL.

Residue 35–52 participates in FAD binding; the sequence is DVQTHHGPPHYAALGGTC. Cys-52 and Cys-57 are oxidised to a cystine. His-461 acts as the Proton acceptor in catalysis.

This sequence belongs to the class-I pyridine nucleotide-disulfide oxidoreductase family. In terms of assembly, homodimer. Requires FAD as cofactor.

The protein resides in the cytoplasm. It catalyses the reaction trypanothione + NADP(+) = trypanothione disulfide + NADPH + H(+). Functionally, trypanothione is the parasite analog of glutathione; this enzyme is the equivalent of glutathione reductase. The sequence is that of Trypanothione reductase (TPR) from Trypanosoma brucei brucei.